Here is a 325-residue protein sequence, read N- to C-terminus: NADH-quinone oxidoreductase subunit H (325 aa).

8 helical membrane passes run 11-31 (ILIS…CGAF), 81-101 (VIFT…FAIV), 114-134 (IGIL…LFAG), 149-169 (ASAQ…GVVA), 186-206 (MWNV…GVAV), 237-257 (FFVG…TLFF), 265-285 (LPPF…FILI), and 304-324 (VCLP…LYNA).

It belongs to the complex I subunit 1 family. NDH-1 is composed of 13 different subunits. Subunits NuoA, H, J, K, L, M, N constitute the membrane sector of the complex.

The protein resides in the cell inner membrane. The catalysed reaction is a quinone + NADH + 5 H(+)(in) = a quinol + NAD(+) + 4 H(+)(out). NDH-1 shuttles electrons from NADH, via FMN and iron-sulfur (Fe-S) centers, to quinones in the respiratory chain. The immediate electron acceptor for the enzyme in this species is believed to be ubiquinone. Couples the redox reaction to proton translocation (for every two electrons transferred, four hydrogen ions are translocated across the cytoplasmic membrane), and thus conserves the redox energy in a proton gradient. This subunit may bind ubiquinone. The polypeptide is NADH-quinone oxidoreductase subunit H (Serratia proteamaculans (strain 568)).